Consider the following 481-residue polypeptide: Putative amino-acid transporter CPE0389 (481 aa).

A run of 13 helical transmembrane segments spans residues 7-27 (LGVI…GVYN), 36-56 (ASAG…WFIA), 87-107 (FLMA…YAVL), 127-147 (LSIA…LAGV), 156-176 (IGTI…LFSF), 208-228 (STML…VVSG), 241-261 (FLGF…PLGV), 289-309 (VIMN…WTVM), 338-358 (FSLL…HFAG), 364-384 (MLSI…LYLF), 401-421 (RKYA…LIYA), 422-442 (AGIN…PVFI), and 461-481 (YFAI…FKFM).

It belongs to the amino acid-polyamine-organocation (APC) superfamily. Basic amino acid/polyamine antiporter (APA) (TC 2.A.3.2) family.

The protein resides in the cell membrane. Functionally, could be an amino acid transporter. The sequence is that of Putative amino-acid transporter CPE0389 from Clostridium perfringens (strain 13 / Type A).